The chain runs to 605 residues: Beta-hexosaminidase ARB_07893 (605 aa).

Residues 1–18 (MLWIWVPGILGLFGRVEA) form the signal peptide. An N-linked (GlcNAc...) asparagine glycan is attached at asparagine 30. Glutamate 293 (nucleophile) is an active-site residue. N-linked (GlcNAc...) asparagine glycosylation occurs at asparagine 342. Catalysis depends on glutamate 374, which acts as the Proton donor. Asparagine 449 carries an N-linked (GlcNAc...) asparagine glycan.

This sequence belongs to the glycosyl hydrolase 20 family.

The protein resides in the secreted. It carries out the reaction Hydrolysis of terminal non-reducing N-acetyl-D-hexosamine residues in N-acetyl-beta-D-hexosaminides.. Functionally, beta-hexosaminidase that shows a broad substrate specificity. The chain is Beta-hexosaminidase ARB_07893 from Arthroderma benhamiae (strain ATCC MYA-4681 / CBS 112371) (Trichophyton mentagrophytes).